The primary structure comprises 285 residues: Golgi phosphoprotein 3-like (285 aa).

The disordered stretch occupies residues 1-42 (MTTLTHRARRTEISKNSEKKMESEEDSNWEKSPDNEDSGDSK). Over residues 10–42 (RTEISKNSEKKMESEEDSNWEKSPDNEDSGDSK) the composition is skewed to basic and acidic residues. Tryptophan 67 and arginine 76 together coordinate a 1,2-diacyl-sn-glycero-3-phospho-(1D-myo-inositol 4-phosphate). At serine 112 the chain carries Phosphoserine. Residues arginine 157 and arginine 160 each contribute to the a 1,2-diacyl-sn-glycero-3-phospho-(1D-myo-inositol 4-phosphate) site. Residues 176–187 (EKQNFLLFDMTT) are beta-hairpin required for oligomerization.

Belongs to the GOLPH3/VPS74 family. In terms of assembly, homooligomer. Does not interact MYO18; differs from GOLPH3 by its inability to interact with MYO18. May interact with ARF1.

Its subcellular location is the golgi apparatus. The protein resides in the golgi stack membrane. It localises to the trans-Golgi network membrane. In terms of biological role, phosphatidylinositol-4-phosphate-binding protein that may antagonize the action of GOLPH3 which is required for the process of vesicle budding at the Golgi and anterograde transport to the plasma membrane. The polypeptide is Golgi phosphoprotein 3-like (GOLPH3L) (Homo sapiens (Human)).